The chain runs to 283 residues: NAD kinase (283 aa).

Aspartate 69 (proton acceptor) is an active-site residue. NAD(+)-binding positions include 69 to 70 (DG), 138 to 139 (NE), lysine 166, aspartate 168, leucine 176, 179 to 184 (TAYNLS), and glutamine 235.

This sequence belongs to the NAD kinase family. It depends on a divalent metal cation as a cofactor.

Its subcellular location is the cytoplasm. The enzyme catalyses NAD(+) + ATP = ADP + NADP(+) + H(+). In terms of biological role, involved in the regulation of the intracellular balance of NAD and NADP, and is a key enzyme in the biosynthesis of NADP. Catalyzes specifically the phosphorylation on 2'-hydroxyl of the adenosine moiety of NAD to yield NADP. This Helicobacter acinonychis (strain Sheeba) protein is NAD kinase.